Consider the following 348-residue polypeptide: Dihydroorotase (348 aa).

Residues H17 and H19 each coordinate Zn(2+). Substrate-binding positions include 19–21 (HLR) and N45. Positions 103, 140, and 178 each coordinate Zn(2+). Position 103 is an N6-carboxylysine (K103). H140 is a substrate binding site. L223 contributes to the substrate binding site. D251 contributes to the Zn(2+) binding site. D251 is an active-site residue. 2 residues coordinate substrate: H255 and A267.

This sequence belongs to the metallo-dependent hydrolases superfamily. DHOase family. Class II DHOase subfamily. In terms of assembly, homodimer. Zn(2+) serves as cofactor.

The catalysed reaction is (S)-dihydroorotate + H2O = N-carbamoyl-L-aspartate + H(+). The protein operates within pyrimidine metabolism; UMP biosynthesis via de novo pathway; (S)-dihydroorotate from bicarbonate: step 3/3. In terms of biological role, catalyzes the reversible cyclization of carbamoyl aspartate to dihydroorotate. This is Dihydroorotase from Escherichia coli O139:H28 (strain E24377A / ETEC).